A 302-amino-acid chain; its full sequence is Uroporphyrinogen-III synthase, chloroplastic (302 aa).

The disordered stretch occupies residues 1–39; sequence MALSSSSHLLPFSRPPATFPRARHAGGGRGRAGATGRFI. Residues 1 to 50 constitute a chloroplast transit peptide; that stretch reads MALSSSSHLLPFSRPPATFPRARHAGGGRGRAGATGRFIACSSPPPPDVV.

It belongs to the uroporphyrinogen-III synthase family.

The protein resides in the plastid. The protein localises to the chloroplast. The enzyme catalyses hydroxymethylbilane = uroporphyrinogen III + H2O. It functions in the pathway porphyrin-containing compound metabolism; protoporphyrin-IX biosynthesis; coproporphyrinogen-III from 5-aminolevulinate: step 3/4. Catalyzes cyclization of the linear tetrapyrrole, hydroxymethylbilane, to the macrocyclic uroporphyrinogen III, a precursor of tetrapyrroles such as chlorophyll, heme and phycobilins. In Oryza sativa subsp. japonica (Rice), this protein is Uroporphyrinogen-III synthase, chloroplastic (UROS).